The following is a 159-amino-acid chain: Protein-export protein SecB (159 aa).

This sequence belongs to the SecB family. In terms of assembly, homotetramer, a dimer of dimers. One homotetramer interacts with 1 SecA dimer.

It is found in the cytoplasm. In terms of biological role, one of the proteins required for the normal export of preproteins out of the cell cytoplasm. It is a molecular chaperone that binds to a subset of precursor proteins, maintaining them in a translocation-competent state. It also specifically binds to its receptor SecA. This Shewanella amazonensis (strain ATCC BAA-1098 / SB2B) protein is Protein-export protein SecB.